Reading from the N-terminus, the 182-residue chain is Inorganic pyrophosphatase (182 aa).

Lysine 30, arginine 44, and tyrosine 56 together coordinate substrate. Mg(2+)-binding residues include aspartate 66, aspartate 71, and aspartate 103. Tyrosine 142 lines the substrate pocket.

The protein belongs to the PPase family. As to quaternary structure, homohexamer. Mg(2+) is required as a cofactor.

The protein resides in the cytoplasm. The enzyme catalyses diphosphate + H2O = 2 phosphate + H(+). Its function is as follows. Catalyzes the hydrolysis of inorganic pyrophosphate (PPi) forming two phosphate ions. In Buchnera aphidicola subsp. Acyrthosiphon pisum (strain APS) (Acyrthosiphon pisum symbiotic bacterium), this protein is Inorganic pyrophosphatase.